Reading from the N-terminus, the 969-residue chain is Protein translocase subunit SecA (969 aa).

ATP-binding positions include Gln99, 117–121 (GEGKT), and Asp631.

The protein belongs to the SecA family. In terms of assembly, monomer and homodimer. Part of the essential Sec protein translocation apparatus which comprises SecA, SecYEG and auxiliary proteins SecDF. Other proteins may also be involved.

The protein localises to the cell inner membrane. Its subcellular location is the cytoplasm. The enzyme catalyses ATP + H2O + cellular proteinSide 1 = ADP + phosphate + cellular proteinSide 2.. In terms of biological role, part of the Sec protein translocase complex. Interacts with the SecYEG preprotein conducting channel. Has a central role in coupling the hydrolysis of ATP to the transfer of proteins into and across the cell membrane, serving as an ATP-driven molecular motor driving the stepwise translocation of polypeptide chains across the membrane. The protein is Protein translocase subunit SecA of Chlamydia felis (strain Fe/C-56) (Chlamydophila felis).